Consider the following 785-residue polypeptide: Polyribonucleotide nucleotidyltransferase (785 aa).

The Mg(2+) site is built by D516 and D522. Positions 582–641 (PRVTTVKIPVDKIGMVIGPKGQTINAIQDETGAEISIEDDGTIYVGATNGPAAQAAVERI) constitute a KH domain. The S1 motif domain maps to 653-722 (GDRFLGTVVK…QRGKIYLDKV (70 aa)). Residues 722-785 (VRPEGAEAPA…SRPRRRTRRS (64 aa)) form a disordered region. Basic and acidic residues predominate over residues 734–764 (AAERPAGRDRGDRGPRDRGDRGGRGPDRGDS).

It belongs to the polyribonucleotide nucleotidyltransferase family. The cofactor is Mg(2+).

Its subcellular location is the cytoplasm. It catalyses the reaction RNA(n+1) + phosphate = RNA(n) + a ribonucleoside 5'-diphosphate. Functionally, involved in mRNA degradation. Catalyzes the phosphorolysis of single-stranded polyribonucleotides processively in the 3'- to 5'-direction. The polypeptide is Polyribonucleotide nucleotidyltransferase (Salinispora tropica (strain ATCC BAA-916 / DSM 44818 / JCM 13857 / NBRC 105044 / CNB-440)).